A 121-amino-acid polypeptide reads, in one-letter code: Large ribosomal subunit protein uL22 (121 aa).

The protein belongs to the universal ribosomal protein uL22 family. In terms of assembly, part of the 50S ribosomal subunit.

In terms of biological role, this protein binds specifically to 23S rRNA; its binding is stimulated by other ribosomal proteins, e.g. L4, L17, and L20. It is important during the early stages of 50S assembly. It makes multiple contacts with different domains of the 23S rRNA in the assembled 50S subunit and ribosome. Functionally, the globular domain of the protein is located near the polypeptide exit tunnel on the outside of the subunit, while an extended beta-hairpin is found that lines the wall of the exit tunnel in the center of the 70S ribosome. The chain is Large ribosomal subunit protein uL22 from Paenarthrobacter aurescens (strain TC1).